Consider the following 145-residue polypeptide: Hemoglobin subunit beta (145 aa).

Positions 1–145 constitute a Globin domain; it reads MLTAEEKAAV…VANALAHRYH (145 aa). A Phosphothreonine modification is found at T11. An N6-acetyllysine modification is found at K58. H62 is a heme b binding site. Position 81 is an N6-acetyllysine (K81). H91 serves as a coordination point for heme b. The residue at position 92 (C92) is an S-nitrosocysteine.

The protein belongs to the globin family. Heterotetramer of two alpha chains and two beta chains. Red blood cells.

In terms of biological role, involved in oxygen transport from the lung to the various peripheral tissues. The chain is Hemoglobin subunit beta (HBB) from Ovis aries musimon (Mouflon).